The primary structure comprises 869 residues: Speckle targeted PIP5K1A-regulated poly(A) polymerase (869 aa).

The Matrin-type zinc-finger motif lies at 16 to 46; that stretch reads FRCCLCHVTTANRPSLDAHLGGRKHRHLVEL. Residues 56-128 form the RRM domain; the sequence is RSVFVSGFPR…HRLRVRPREQ (73 aa). The segment at 111–147 is disordered; sequence QPQHTLGGHRLRVRPREQKEFQSPASKSPKGAAPDSH. Serine 205 contributes to the ATP binding site. Residues aspartate 216 and aspartate 218 each contribute to the Mg(2+) site. Positions 216 and 218 each coordinate UTP. Residues 252 to 315 form a disordered region; sequence QALACTPASP…PASPLQEDRG (64 aa). Over residues 259–269 the composition is skewed to pro residues; the sequence is ASPPDSQPPSP. Polar residues predominate over residues 279–290; sequence TPSSSLAPQTPD. Asparagine 391 is an ATP binding site. Positions 391, 413, 431, and 548 each coordinate UTP. Residues 490-548 enclose the PAP-associated domain; sequence LSSLLAQFFSCVSCWDLRGSLLSLREGQALPVAGDLPSNRWEGLRLGPMNLQDPFDLSH. The tract at residues 597-869 is KA1; binds the bulging loops of U6 snRNA but is dispensable for terminal uridylyltransferase activity; the sequence is SSPSSLLSAT…VFLPQALRNL (273 aa). 2 stretches are compositionally biased toward basic and acidic residues: residues 637 to 648 and 660 to 686; these read GTKRLRSDRGGP and LKLD…HSED. 2 disordered regions span residues 637 to 686 and 720 to 755; these read GTKR…HSED and LATG…TGRG. A phosphoserine mark is found at serine 684 and serine 748.

This sequence belongs to the DNA polymerase type-B-like family. In terms of assembly, associates with the cleavage and polyadenylation specificity factor (CPSF) complex. Interacts with CPSF1 and CPSF3; the interaction is direct. Interacts with PIP5K1A. It depends on Mg(2+) as a cofactor. Requires Mn(2+) as cofactor. Post-translationally, phosphorylated by CK1 in the proline-rich (Pro-rich) region.

It is found in the nucleus. The protein resides in the nucleolus. It localises to the nucleus speckle. The catalysed reaction is RNA(n) + UTP = RNA(n)-3'-uridine ribonucleotide + diphosphate. It catalyses the reaction RNA(n) + ATP = RNA(n)-3'-adenine ribonucleotide + diphosphate. With respect to regulation, adenylyltransferase activity is specifically phosphatidylinositol 4,5-bisphosphate (PtdIns(4,5)P2). Poly(A) polymerase that creates the 3'-poly(A) tail of specific pre-mRNAs. Localizes to nuclear speckles together with PIP5K1A and mediates polyadenylation of a select set of mRNAs, such as HMOX1. In addition to polyadenylation, it is also required for the 3'-end cleavage of pre-mRNAs: binds to the 3'UTR of targeted pre-mRNAs and promotes the recruitment and assembly of the CPSF complex on the 3'UTR of pre-mRNAs. In addition to adenylyltransferase activity, also has uridylyltransferase activity. However, the ATP ratio is higher than UTP in cells, suggesting that it functions primarily as a poly(A) polymerase. Acts as a specific terminal uridylyltransferase for U6 snRNA in vitro: responsible for a controlled elongation reaction that results in the restoration of the four 3'-terminal UMP-residues found in newly transcribed U6 snRNA. Not involved in replication-dependent histone mRNA degradation. The protein is Speckle targeted PIP5K1A-regulated poly(A) polymerase (TUT1) of Ailuropoda melanoleuca (Giant panda).